We begin with the raw amino-acid sequence, 473 residues long: Zinc finger and SCAN domain-containing protein 21 (473 aa).

Residue lysine 27 forms a Glycyl lysine isopeptide (Lys-Gly) (interchain with G-Cter in SUMO2) linkage. Residues 45 to 127 form the SCAN box domain; that stretch reads RQRFRQFGYH…TLLEDLEREL (83 aa). Residues 127 to 167 form a disordered region; sequence LDEPGHQVSTPPNEQKPVWEKISSSGTAKESPSSMQPQPLE. The segment covering 148 to 165 has biased composition (polar residues); the sequence is ISSSGTAKESPSSMQPQP. Glycyl lysine isopeptide (Lys-Gly) (interchain with G-Cter in SUMO2) cross-links involve residues lysine 221 and lysine 232. Residues 244-272 form a disordered region; that stretch reads LENEKGTKPPLQEAGSKKGRESVPTKPTP. Residues 258-272 are compositionally biased toward basic and acidic residues; that stretch reads GSKKGRESVPTKPTP. 7 consecutive C2H2-type zinc fingers follow at residues 277 to 299, 305 to 327, 333 to 354, 360 to 382, 388 to 410, 416 to 438, and 444 to 466; these read YICA…RRTH, YVCT…YRTH, YDCK…QRMH, YQCK…YRIH, YQCN…QRLH, YKCK…HRIH, and YWCH…QRVH. Lysine 349 participates in a covalent cross-link: Glycyl lysine isopeptide (Lys-Gly) (interchain with G-Cter in SUMO2).

It belongs to the krueppel C2H2-type zinc-finger protein family.

The protein localises to the nucleus. Functionally, strong transcriptional activator. Plays an important role in spermatogenesis; essential for the progression of meiotic prophase I in spermatocytes. The polypeptide is Zinc finger and SCAN domain-containing protein 21 (ZSCAN21) (Pan troglodytes (Chimpanzee)).